Consider the following 483-residue polypeptide: Regulatory protein ViaA (483 aa).

Belongs to the ViaA family. In terms of assembly, homodimer. Interacts with RavA.

It localises to the cytoplasm. Functionally, component of the RavA-ViaA chaperone complex, which may act on the membrane to optimize the function of some of the respiratory chains. ViaA stimulates the ATPase activity of RavA. The protein is Regulatory protein ViaA of Shigella sonnei (strain Ss046).